The following is a 179-amino-acid chain: ATP-dependent protease subunit HslV (179 aa).

Threonine 8 is an active-site residue. Serine 164, cysteine 167, and threonine 170 together coordinate Na(+).

Belongs to the peptidase T1B family. HslV subfamily. As to quaternary structure, a double ring-shaped homohexamer of HslV is capped on each side by a ring-shaped HslU homohexamer. The assembly of the HslU/HslV complex is dependent on binding of ATP.

It localises to the cytoplasm. The catalysed reaction is ATP-dependent cleavage of peptide bonds with broad specificity.. Its activity is regulated as follows. Allosterically activated by HslU binding. In terms of biological role, protease subunit of a proteasome-like degradation complex believed to be a general protein degrading machinery. This chain is ATP-dependent protease subunit HslV, found in Staphylococcus carnosus (strain TM300).